Consider the following 304-residue polypeptide: Aspartate carbamoyltransferase catalytic subunit (304 aa).

2 residues coordinate carbamoyl phosphate: Arg49 and Thr50. Lys77 is a binding site for L-aspartate. Carbamoyl phosphate-binding residues include Arg99, His127, and Gln130. The L-aspartate site is built by Arg160 and Arg211. Ala252 and Pro253 together coordinate carbamoyl phosphate.

This sequence belongs to the aspartate/ornithine carbamoyltransferase superfamily. ATCase family. Heterododecamer (2C3:3R2) of six catalytic PyrB chains organized as two trimers (C3), and six regulatory PyrI chains organized as three dimers (R2).

The enzyme catalyses carbamoyl phosphate + L-aspartate = N-carbamoyl-L-aspartate + phosphate + H(+). Its pathway is pyrimidine metabolism; UMP biosynthesis via de novo pathway; (S)-dihydroorotate from bicarbonate: step 2/3. Functionally, catalyzes the condensation of carbamoyl phosphate and aspartate to form carbamoyl aspartate and inorganic phosphate, the committed step in the de novo pyrimidine nucleotide biosynthesis pathway. The polypeptide is Aspartate carbamoyltransferase catalytic subunit (Bacillus mycoides (strain KBAB4) (Bacillus weihenstephanensis)).